Reading from the N-terminus, the 53-residue chain is Antitoxin RelB3 (53 aa).

Forms heterodimers with RelE and possibly a heterotetramer RelE3-RelB3(2)-RelE3 from 2 heterodimers. The heterotetramer is probably not very stable in solution.

In terms of biological role, antitoxin component of a type II toxin-antitoxin (TA) system. Probably neutralizes the toxic activity of cognate toxin RelE. The chain is Antitoxin RelB3 (relB3) from Methanocaldococcus jannaschii (strain ATCC 43067 / DSM 2661 / JAL-1 / JCM 10045 / NBRC 100440) (Methanococcus jannaschii).